The chain runs to 434 residues: Trigger factor (434 aa).

A PPIase FKBP-type domain is found at 161 to 246 (EDRVTIDFTG…LKKVEERELP (86 aa)).

Belongs to the FKBP-type PPIase family. Tig subfamily.

Its subcellular location is the cytoplasm. It carries out the reaction [protein]-peptidylproline (omega=180) = [protein]-peptidylproline (omega=0). Functionally, involved in protein export. Acts as a chaperone by maintaining the newly synthesized protein in an open conformation. Functions as a peptidyl-prolyl cis-trans isomerase. This chain is Trigger factor, found in Pectobacterium carotovorum subsp. carotovorum (strain PC1).